We begin with the raw amino-acid sequence, 495 residues long: Heat stress transcription factor A-1a (495 aa).

A DNA-binding region spans residues 50 to 144 (PPPFLSKTYD…LLKKISRRKS (95 aa)). Residues 140 to 164 (SRRKSVQGHGSSSSNPQSQQLSQGQ) are disordered. The segment covering 146–164 (QGHGSSSSNPQSQQLSQGQ) has biased composition (low complexity). The interval 172–238 (SCVEVGKFGL…QIMSFLAKAV (67 aa)) is hydrophobic repeat HR-A/B. Residues 255–288 (NMHVTEANKKRRLREDSTAATESNSHSHSLEASD) form a disordered region. The Nuclear localization signal signature appears at 262-268 (NKKRRLR). A compositionally biased stretch (polar residues) spans 272 to 281 (TAATESNSHS). An AHA motif is present at residues 433 to 442 (FEFLEEYMPE). Residues 445-477 (VFGDATTLENNNNNNNNNNNNNNNNNNNNTNGR) form a disordered region. Low complexity predominate over residues 454-473 (NNNNNNNNNNNNNNNNNNNN). A Nuclear export signal motif is present at residues 482–489 (LIEELGLL).

It belongs to the HSF family. Class A subfamily. Homotrimer. Interacts with HSP70-1 and HSP70-4. Binds to CRK1. Binds to HSBP. In terms of processing, exhibits temperature-dependent phosphorylation. Phosphorylated by CRK1. Constitutively expressed.

Its subcellular location is the cytoplasm. The protein resides in the nucleus. Its function is as follows. Transcriptional activator that specifically binds DNA sequence 5'-AGAAnnTTCT-3' known as heat shock promoter elements (HSE). The sequence is that of Heat stress transcription factor A-1a (HSFA1A) from Arabidopsis thaliana (Mouse-ear cress).